The primary structure comprises 64 residues: Large ribosomal subunit protein bL33 (64 aa).

This sequence belongs to the bacterial ribosomal protein bL33 family.

The protein is Large ribosomal subunit protein bL33 of Picosynechococcus sp. (strain ATCC 27264 / PCC 7002 / PR-6) (Agmenellum quadruplicatum).